The sequence spans 243 residues: Pyridoxine 5'-phosphate synthase (243 aa).

A 3-amino-2-oxopropyl phosphate-binding site is contributed by Asn9. A 1-deoxy-D-xylulose 5-phosphate-binding site is contributed by 11–12 (DH). Residue Arg20 participates in 3-amino-2-oxopropyl phosphate binding. Catalysis depends on His45, which acts as the Proton acceptor. 1-deoxy-D-xylulose 5-phosphate contacts are provided by Arg47 and His52. Glu72 (proton acceptor) is an active-site residue. A 1-deoxy-D-xylulose 5-phosphate-binding site is contributed by Thr102. The active-site Proton donor is His193. Residues Gly194 and 215–216 (GH) each bind 3-amino-2-oxopropyl phosphate.

Belongs to the PNP synthase family. Homooctamer; tetramer of dimers.

It localises to the cytoplasm. It carries out the reaction 3-amino-2-oxopropyl phosphate + 1-deoxy-D-xylulose 5-phosphate = pyridoxine 5'-phosphate + phosphate + 2 H2O + H(+). It participates in cofactor biosynthesis; pyridoxine 5'-phosphate biosynthesis; pyridoxine 5'-phosphate from D-erythrose 4-phosphate: step 5/5. In terms of biological role, catalyzes the complicated ring closure reaction between the two acyclic compounds 1-deoxy-D-xylulose-5-phosphate (DXP) and 3-amino-2-oxopropyl phosphate (1-amino-acetone-3-phosphate or AAP) to form pyridoxine 5'-phosphate (PNP) and inorganic phosphate. In Shigella boydii serotype 4 (strain Sb227), this protein is Pyridoxine 5'-phosphate synthase.